A 171-amino-acid polypeptide reads, in one-letter code: Ribosome maturation factor RimM (171 aa).

The region spanning 96-170 (AEGEYYYHEI…LVTIHVMEGL (75 aa)) is the PRC barrel domain.

Belongs to the RimM family. In terms of assembly, binds ribosomal protein uS19.

Its subcellular location is the cytoplasm. In terms of biological role, an accessory protein needed during the final step in the assembly of 30S ribosomal subunit, possibly for assembly of the head region. Essential for efficient processing of 16S rRNA. May be needed both before and after RbfA during the maturation of 16S rRNA. It has affinity for free ribosomal 30S subunits but not for 70S ribosomes. The polypeptide is Ribosome maturation factor RimM (Bacillus cereus (strain G9842)).